The primary structure comprises 302 residues: Zinc transporter ZIP1 (302 aa).

At 1 to 6 the chain is on the extracellular side; sequence MEYLLQ. The chain crosses the membrane as a helical span at residues 7-27; the sequence is VKIAALVGLLFLTLIFGFIPA. Residues 28-44 lie on the Cytoplasmic side of the membrane; it reads RVKWFRDTDGTETHRTV. The chain crosses the membrane as a helical span at residues 45–65; it reads LSLISCFAGGVFLSACFLDII. Over 66 to 80 the chain is Extracellular; that stretch reads PDYLSDINTELHARQ. The chain crosses the membrane as a helical span at residues 81-101; the sequence is LETSFPLPEFIMAAGFFTVLI. Over 102–158 the chain is Cytoplasmic; sequence LERIVLNCKEMRATHEERTTLIPERKSGHGHGHGDGPDPESSGHHVHVDFQAHSPFR. The segment at 123–145 is disordered; the sequence is IPERKSGHGHGHGDGPDPESSGH. A helical transmembrane segment spans residues 159–179; that stretch reads SFMLFLSLSLHSIFEGLAIGL. Topologically, residues 180-185 are extracellular; sequence QTTDPK. Residues 186-206 form a helical membrane-spanning segment; the sequence is VVEICIAILVHKSIIVFSLAV. Topologically, residues 207–216 are cytoplasmic; that stretch reads KLVQSAIPPL. A helical transmembrane segment spans residues 217–237; sequence WVAAYIGVFALMSPVGIAIGI. Residues 238-251 lie on the Extracellular side of the membrane; the sequence is SVMEAQLAAGPLIQ. Residues 252 to 272 form a helical membrane-spanning segment; that stretch reads AILEGFAAGTFVYITFLEILP. The Cytoplasmic portion of the chain corresponds to 273–281; that stretch reads HELNSPGKQ. Residues 282 to 302 traverse the membrane as a helical segment; the sequence is LLKVLFLLLGFSIMAALSFLG.

Belongs to the ZIP transporter (TC 2.A.5) family. As to expression, highest levels in ovary, lower levels in intestine and gill, barely detected in kidney.

The protein resides in the cell membrane. Its subcellular location is the endoplasmic reticulum membrane. The catalysed reaction is Zn(2+)(in) = Zn(2+)(out). Its function is as follows. Transporter for the divalent cation Zn(2+). Mediates the influx of Zn(2+) into cells from extracellular space. The chain is Zinc transporter ZIP1 (slc39a1) from Takifugu rubripes (Japanese pufferfish).